We begin with the raw amino-acid sequence, 240 residues long: MKAGYFITGTDTGVGKTIVTSAILRSFIKKGLKVGAMKVIETGCLNKDGILLPSDGMLLRDMAEMNDSLDLITPIKLENPLSPLVASRIEEIEVDIERIFRAFETLQKKYDYLLVEGVGGLMVPLNKEEKKKSMFYFVRDLIKDMGLPVILVTRPTLGTINHTLLTLEALKNKKISVKGYIINFSEPAKNDIAEKTNPQVLKELVDVPCLGILPYLTELNKDKIGETAIKNFDIEALISL.

13–18 provides a ligand contact to ATP; that stretch reads GVGKTI. Residue Thr-17 participates in Mg(2+) binding. Residue Lys-38 is part of the active site. Thr-42 is a binding site for substrate. ATP-binding positions include Asp-55, 116 to 119, and 214 to 216; these read EGVG and PYL. 2 residues coordinate Mg(2+): Asp-55 and Glu-116.

This sequence belongs to the dethiobiotin synthetase family. In terms of assembly, homodimer. Mg(2+) is required as a cofactor.

Its subcellular location is the cytoplasm. The enzyme catalyses (7R,8S)-7,8-diammoniononanoate + CO2 + ATP = (4R,5S)-dethiobiotin + ADP + phosphate + 3 H(+). The protein operates within cofactor biosynthesis; biotin biosynthesis; biotin from 7,8-diaminononanoate: step 1/2. Its function is as follows. Catalyzes a mechanistically unusual reaction, the ATP-dependent insertion of CO2 between the N7 and N8 nitrogen atoms of 7,8-diaminopelargonic acid (DAPA, also called 7,8-diammoniononanoate) to form a ureido ring. The protein is ATP-dependent dethiobiotin synthetase BioD of Thermodesulfovibrio yellowstonii (strain ATCC 51303 / DSM 11347 / YP87).